The following is a 383-amino-acid chain: Putative gustatory receptor 22c (383 aa).

Over 1–11 (MFASRSDLQSR) the chain is Cytoplasmic. Residues 12-32 (LCWIILKATLYSSWFLGVFPY) form a helical membrane-spanning segment. The Extracellular segment spans residues 33-45 (RFDSRNGQLKRSR). The chain crosses the membrane as a helical span at residues 46-66 (FLLFYGLILNFFLLLKMVCSG). Residues 67-86 (GQKLGIPEAFARNSVLENTH) lie on the Cytoplasmic side of the membrane. The helical transmembrane segment at 87–107 (YTTGMLAVFSCVVIHFLNFWG) threads the bilayer. At 108-144 (STRVQDLANELLVLEYQQFASLNETKCPKFNSFVIQK) the chain is on the extracellular side. N-linked (GlcNAc...) asparagine glycosylation is present at asparagine 130. A helical transmembrane segment spans residues 145-165 (WLSVIGLLLSYLSIAYGLPGN). The Cytoplasmic portion of the chain corresponds to 166–250 (NFSVEMVLIN…YMVATYEYHM (85 aa)). The helical transmembrane segment at 251-271 (TLVLTTGLASNFLAIYSWIVL) threads the bilayer. The Extracellular portion of the chain corresponds to 272 to 279 (DISMNINF). Residues 280–300 (IYLLIFPLFLLVNVWNLWLSI) traverse the membrane as a helical segment. Residues 301–360 (AASDLAENAGKSTQTVLKLFADLEVKDIELERSVNEFALLCGHCQFNFHVCGLFTINYKM) are Cytoplasmic-facing. Residues 361–381 (GFQMIITSFLYLIYMIQFDFM) traverse the membrane as a helical segment. The Extracellular segment spans residues 382-383 (NL).

Belongs to the insect chemoreceptor superfamily. Gustatory receptor (GR) family. Gr22e subfamily. Taste bristles in the foreleg and labial palps.

It is found in the cell membrane. Its function is as follows. Probable gustatory receptor which mediates acceptance or avoidance behavior, depending on its substrates. In Drosophila melanogaster (Fruit fly), this protein is Putative gustatory receptor 22c (Gr22c).